A 332-amino-acid polypeptide reads, in one-letter code: RNA polymerase principal sigma factor HrdD (332 aa).

A disordered region spans residues 1 to 25 (MATRAVARRQSATGETADSASSVRA). Residues 10–22 (QSATGETADSASS) show a composition bias toward polar residues. Positions 124 to 137 (DLIQEGNAGLVRAV) match the Polymerase core binding motif. The segment at residues 294 to 313 (LTEVGKEHGLTRERIRQIEK) is a DNA-binding region (H-T-H motif).

Belongs to the sigma-70 factor family.

Functionally, sigma factors are initiation factors that promote the attachment of RNA polymerase to specific initiation sites and are then released. The polypeptide is RNA polymerase principal sigma factor HrdD (hrdD) (Streptomyces viridifaciens).